A 541-amino-acid polypeptide reads, in one-letter code: Imidazole glycerol phosphate synthase hisHF (541 aa).

A Glutamine amidotransferase type-1 domain is found at Ile2 to Ser214. Residues Cys80, His189, and Glu191 each act as for GATase activity in the active site. The segment at Leu228–Thr541 is cyclase. Residues Asp237 and Asp396 contribute to the active site.

The protein in the C-terminal section; belongs to the HisA/HisF family.

The catalysed reaction is 5-[(5-phospho-1-deoxy-D-ribulos-1-ylimino)methylamino]-1-(5-phospho-beta-D-ribosyl)imidazole-4-carboxamide + L-glutamine = D-erythro-1-(imidazol-4-yl)glycerol 3-phosphate + 5-amino-1-(5-phospho-beta-D-ribosyl)imidazole-4-carboxamide + L-glutamate + H(+). It carries out the reaction L-glutamine + H2O = L-glutamate + NH4(+). The protein operates within amino-acid biosynthesis; L-histidine biosynthesis; L-histidine from 5-phospho-alpha-D-ribose 1-diphosphate: step 5/9. Functionally, IGPS catalyzes the conversion of PRFAR and glutamine to IGP, AICAR and glutamate. The glutaminase domain produces the ammonia necessary for the cyclase domain to produce IGP and AICAR from PRFAR. The ammonia is channeled to the active site of the cyclase domain. The sequence is that of Imidazole glycerol phosphate synthase hisHF (his4) from Schizosaccharomyces pombe (strain 972 / ATCC 24843) (Fission yeast).